The sequence spans 450 residues: Tubulin alpha-3 chain (450 aa).

Gln-11 contributes to the GTP binding site. Lys-40 bears the N6-acetyllysine mark. Residues Glu-71, Gly-144, Thr-145, Thr-179, Asn-206, and Asn-228 each coordinate GTP. Glu-71 contributes to the Mg(2+) binding site. Glu-254 is an active-site residue.

It belongs to the tubulin family. As to quaternary structure, dimer of alpha and beta chains. A typical microtubule is a hollow water-filled tube with an outer diameter of 25 nm and an inner diameter of 15 nM. Alpha-beta heterodimers associate head-to-tail to form protofilaments running lengthwise along the microtubule wall with the beta-tubulin subunit facing the microtubule plus end conferring a structural polarity. Microtubules usually have 13 protofilaments but different protofilament numbers can be found in some organisms and specialized cells. Mg(2+) serves as cofactor. Post-translationally, undergoes a tyrosination/detyrosination cycle, the cyclic removal and re-addition of a C-terminal tyrosine residue by the enzymes tubulin tyrosine carboxypeptidase (TTCP) and tubulin tyrosine ligase (TTL), respectively. In terms of processing, acetylation of alpha chains at Lys-40 stabilizes microtubules and affects affinity and processivity of microtubule motors. This modification has a role in multiple cellular functions, ranging from cell motility, cell cycle progression or cell differentiation to intracellular trafficking and signaling.

The protein resides in the cytoplasm. The protein localises to the cytoskeleton. It carries out the reaction GTP + H2O = GDP + phosphate + H(+). In terms of biological role, tubulin is the major constituent of microtubules, a cylinder consisting of laterally associated linear protofilaments composed of alpha- and beta-tubulin heterodimers. Microtubules grow by the addition of GTP-tubulin dimers to the microtubule end, where a stabilizing cap forms. Below the cap, tubulin dimers are in GDP-bound state, owing to GTPase activity of alpha-tubulin. This Zea mays (Maize) protein is Tubulin alpha-3 chain (TUBA3).